The chain runs to 600 residues: CoA ligase FVEG_12633 (600 aa).

ATP-binding positions include 170–174, His-214, 321–323, and 342–343; these read TSGTT, AAL, and ER. The segment at 241-342 is SBD1; that stretch reads NSVWTRLAAP…QLTGGNVLLE (102 aa). The tract at residues 343–420 is SBD2; sequence RYGMTEVGMA…LRGPTVFTGY (78 aa). Met-346 provides a ligand contact to substrate. ATP is bound by residues Thr-347, Asp-441, Arg-471, and Lys-564. Lys-564 contributes to the oxalate binding site.

It belongs to the ATP-dependent AMP-binding enzyme family.

CoA ligase; part of the Fusarium detoxification of benzoxazolinone cluster 2 (FDB2) involved in the degradation of benzoxazolinones produced by the host plant. Maize, wheat, and rye produce the 2 benzoxazinone phytoanticipins 2,4-dihy-droxy-7-methoxy-1,4-benzoxazin-3-one (DIMBOA) and 2,4-dihydroxy-1,4-benzoxazin-3-one (DIBOA) that, due to their inherent instability once released, spontaneously degrade to the more stable corresponding benzoxazolinones, 6-methoxy-2-benzoxazolinone (MBOA) and 2-benzoxazolinone (BOA), respectively. The first step in the detoxification of benzoxazolinones involves the hydrolysis of the cyclic ester bond of benzoxazolinones by the FDB1 cluster gamma-lactamase MBL1 to aminophenols. MBL1 is able to convert BOA into 2-aminophenol (2-AP), as well as MBOA into 5-methoxy-2-aminophenol (2-AMP). The FDB2 cluster N-malonyltransferase FDB2/NAT1 then metabolizes aminophenols via N-malonylation to non-toxic malonamic acids. FDB2/NAT1 converts 2-AP into N-(2-hydroxyphenyl) malonamic acid (HPMA) and 2-AMP into N-(2-hydroxy-4-methoxyphenyl) malonamic acid (HMPMA). The duplicated dienlactone hydrolases DLH1 and DLH2 may provide redundant function for hydrolyzing the lactone moiety in the BOA molecule. The roles of the amidases an other enzymes encoded by the 2 FDB clusters have not been identified so far. The protein is CoA ligase FVEG_12633 of Gibberella moniliformis (strain M3125 / FGSC 7600) (Maize ear and stalk rot fungus).